The sequence spans 591 residues: uncharacterized protein (591 aa).

Transmembrane regions (helical) follow at residues 389–409 (VYLG…SALI), 411–431 (GGSP…GGIL), 538–558 (GILP…FALS), and 571–591 (PIIS…FNLL).

The protein localises to the membrane. This is an uncharacterized protein from Mycoplasma (Bacteriophage L2).